The following is a 194-amino-acid chain: tRNA (mnm(5)s(2)U34)-methyltransferase (194 aa).

The S-adenosyl-L-methionine site is built by histidine 33, aspartate 34, aspartate 52, glutamine 54, serine 79, and histidine 80.

It belongs to the methyltransferase superfamily. MnmM family. Homodimer.

It catalyses the reaction 5-aminomethyl-2-thiouridine(34) in tRNA + S-adenosyl-L-methionine = 5-methylaminomethyl-2-thiouridine(34) in tRNA + S-adenosyl-L-homocysteine + H(+). It participates in tRNA modification. In terms of biological role, involved in the biosynthesis of 5-methylaminomethyl-2-thiouridine (mnm(5)s(2)U) at the wobble position (U34) in tRNA. Catalyzes the transfer of a methyl group from S-adenosyl-L-methionine to nm(5)s(2)U34 to form mnm(5)s(2)U34. In Bacillus subtilis (strain 168), this protein is tRNA (mnm(5)s(2)U34)-methyltransferase.